A 206-amino-acid polypeptide reads, in one-letter code: Large ribosomal subunit protein uL4 (206 aa).

The protein belongs to the universal ribosomal protein uL4 family. In terms of assembly, part of the 50S ribosomal subunit.

Functionally, one of the primary rRNA binding proteins, this protein initially binds near the 5'-end of the 23S rRNA. It is important during the early stages of 50S assembly. It makes multiple contacts with different domains of the 23S rRNA in the assembled 50S subunit and ribosome. Forms part of the polypeptide exit tunnel. The chain is Large ribosomal subunit protein uL4 from Afipia carboxidovorans (strain ATCC 49405 / DSM 1227 / KCTC 32145 / OM5) (Oligotropha carboxidovorans).